We begin with the raw amino-acid sequence, 785 residues long: Endonuclease MutS2 (785 aa).

331 to 338 (GPNTGGKT) is a binding site for ATP. The 76-residue stretch at 710-785 (LDLRGLYADE…GLGVTVVELA (76 aa)) folds into the Smr domain.

This sequence belongs to the DNA mismatch repair MutS family. MutS2 subfamily. In terms of assembly, homodimer. Binds to stalled ribosomes, contacting rRNA.

Endonuclease that is involved in the suppression of homologous recombination and thus may have a key role in the control of bacterial genetic diversity. Its function is as follows. Acts as a ribosome collision sensor, splitting the ribosome into its 2 subunits. Detects stalled/collided 70S ribosomes which it binds and splits by an ATP-hydrolysis driven conformational change. Acts upstream of the ribosome quality control system (RQC), a ribosome-associated complex that mediates the extraction of incompletely synthesized nascent chains from stalled ribosomes and their subsequent degradation. Probably generates substrates for RQC. The sequence is that of Endonuclease MutS2 from Pelotomaculum thermopropionicum (strain DSM 13744 / JCM 10971 / SI).